The following is a 360-amino-acid chain: Photosystem II protein D1 2 (360 aa).

3 helical membrane passes run 29–46 (YIGW…AATI), 118–133 (HFLI…EWEL), and 142–156 (WIPV…AATA). H118 provides a ligand contact to chlorophyll a. Y126 serves as a coordination point for pheophytin a. Residues D170 and E189 each coordinate [CaMn4O5] cluster. Residues 197–218 (FHMLGVAGVFGGALFAAMHGSL) form a helical membrane-spanning segment. H198 contacts chlorophyll a. A quinone-binding positions include H215 and 264–265 (SF). H215 lines the Fe cation pocket. H272 contributes to the Fe cation binding site. Residues 274–288 (FLAAWPVVGIWFAAL) form a helical membrane-spanning segment. Residues H332, E333, D342, and A344 each contribute to the [CaMn4O5] cluster site. Residues 345–360 (SGELAPVAMIAPSIEA) constitute a propeptide that is removed on maturation.

It belongs to the reaction center PufL/M/PsbA/D family. As to quaternary structure, PSII is composed of 1 copy each of membrane proteins PsbA, PsbB, PsbC, PsbD, PsbE, PsbF, PsbH, PsbI, PsbJ, PsbK, PsbL, PsbM, PsbT, PsbX, PsbY, PsbZ, Psb30/Ycf12, peripheral proteins PsbO, CyanoQ (PsbQ), PsbU, PsbV and a large number of cofactors. It forms dimeric complexes. The cofactor is The D1/D2 heterodimer binds P680, chlorophylls that are the primary electron donor of PSII, and subsequent electron acceptors. It shares a non-heme iron and each subunit binds pheophytin, quinone, additional chlorophylls, carotenoids and lipids. D1 provides most of the ligands for the Mn4-Ca-O5 cluster of the oxygen-evolving complex (OEC). There is also a Cl(-1) ion associated with D1 and D2, which is required for oxygen evolution. The PSII complex binds additional chlorophylls, carotenoids and specific lipids.. Post-translationally, tyr-161 forms a radical intermediate that is referred to as redox-active TyrZ, YZ or Y-Z. C-terminally processed by CtpA; processing is essential to allow assembly of the oxygen-evolving complex and thus photosynthetic growth.

The protein localises to the cellular thylakoid membrane. It catalyses the reaction 2 a plastoquinone + 4 hnu + 2 H2O = 2 a plastoquinol + O2. Functionally, photosystem II (PSII) is a light-driven water:plastoquinone oxidoreductase that uses light energy to abstract electrons from H(2)O, generating O(2) and a proton gradient subsequently used for ATP formation. It consists of a core antenna complex that captures photons, and an electron transfer chain that converts photonic excitation into a charge separation. The D1/D2 (PsbA/PsbD) reaction center heterodimer binds P680, the primary electron donor of PSII as well as several subsequent electron acceptors. The sequence is that of Photosystem II protein D1 2 from Synechococcus elongatus.